Here is a 369-residue protein sequence, read N- to C-terminus: Anhydro-N-acetylmuramic acid kinase (369 aa).

Residue 9–16 participates in ATP binding; the sequence is GTSLDAVD.

It belongs to the anhydro-N-acetylmuramic acid kinase family.

The catalysed reaction is 1,6-anhydro-N-acetyl-beta-muramate + ATP + H2O = N-acetyl-D-muramate 6-phosphate + ADP + H(+). It participates in amino-sugar metabolism; 1,6-anhydro-N-acetylmuramate degradation. The protein operates within cell wall biogenesis; peptidoglycan recycling. In terms of biological role, catalyzes the specific phosphorylation of 1,6-anhydro-N-acetylmuramic acid (anhMurNAc) with the simultaneous cleavage of the 1,6-anhydro ring, generating MurNAc-6-P. Is required for the utilization of anhMurNAc either imported from the medium or derived from its own cell wall murein, and thus plays a role in cell wall recycling. In Phenylobacterium zucineum (strain HLK1), this protein is Anhydro-N-acetylmuramic acid kinase.